Here is a 117-residue protein sequence, read N- to C-terminus: Nitrogen regulatory protein GlnK1 (117 aa).

Residues threonine 32, glycine 40 to glutamine 42, and glycine 92 to lysine 95 contribute to the ADP site. ATP is bound by residues threonine 32, glycine 40–glutamine 42, and glycine 92–lysine 95.

The protein belongs to the P(II) protein family. Homotrimer. Interacts and forms stable complexes with the glutamine synthetase GlnA1.

It is found in the cytoplasm. With respect to regulation, inhibitory effects on GlnA1 are abolished in the presence of the effector 2-oxoglutarate. Involved in the regulation of nitrogen metabolism. Regulates the activity of its targets by protein-protein interaction in response to the nitrogen status of the cell. Allows finetuning control of the glutamine synthetase GlnA1 under changing nitrogen availabilities via direct protein interaction. The chain is Nitrogen regulatory protein GlnK1 from Methanosarcina mazei (strain ATCC BAA-159 / DSM 3647 / Goe1 / Go1 / JCM 11833 / OCM 88) (Methanosarcina frisia).